The sequence spans 398 residues: Alpha-(1,3)-fucosyltransferase 4 (398 aa).

The Cytoplasmic segment spans residues 1–15 (MRARWGRRGARRGGP). A helical; Signal-anchor for type II membrane protein membrane pass occupies residues 16-40 (GLPGTHLALLAASLLSSSVAIYVCW). Topologically, residues 41-398 (KQLPPLPWAS…VPNLAGWFQQ (358 aa)) are lumenal. Residues Asn-84, Asn-183, and Asn-311 are each glycosylated (N-linked (GlcNAc...) asparagine).

It belongs to the glycosyltransferase 10 family.

The protein localises to the golgi apparatus. It localises to the golgi stack membrane. The catalysed reaction is a beta-D-galactosyl-(1-&gt;4)-N-acetyl-beta-D-glucosaminyl derivative + GDP-beta-L-fucose = a beta-D-galactosyl-(1-&gt;4)-[alpha-L-fucosyl-(1-&gt;3)]-N-acetyl-beta-D-glucosaminyl derivative + GDP + H(+). The enzyme catalyses an N-acetyl-alpha-neuraminyl-(2-&gt;3)-beta-D-galactosyl-(1-&gt;4)-N-acetyl-beta-D-glucosaminyl derivative + GDP-beta-L-fucose = an alpha-Neu5Ac-(2-&gt;3)-beta-D-Gal-(1-&gt;4)-[alpha-L-Fuc-(1-&gt;3)]-beta-D-GlcNAc derivative + GDP + H(+). It carries out the reaction an alpha-Neu5Ac-(2-&gt;3)-beta-D-Gal-(1-&gt;4)-beta-D-GlcNAc-(1-&gt;3)-beta-D-Gal-(1-&gt;4)-beta-D-GlcNAc derivative + GDP-beta-L-fucose = an alpha-Neu5Ac-(2-&gt;3)-beta-D-Gal-(1-&gt;4)-beta-D-GlcNAc-(1-&gt;3)-beta-D-Gal-(1-&gt;4)-[alpha-L-Fuc-(1-&gt;3)]-beta-D-GlcNAc derivative + GDP + H(+). It catalyses the reaction an alpha-Neu5Ac-(2-&gt;3)-beta-D-Gal-(1-&gt;4)-beta-D-GlcNAc6S derivative + GDP-beta-L-fucose = an alpha-Neu5Ac-(2-&gt;3)-beta-D-Gal-(1-&gt;4)-[alpha-L-Fuc-(1-&gt;3)]-beta-D-GlcNAc6S derivative + GDP + H(+). Its pathway is protein modification; protein glycosylation. Catalyzes alpha(1-&gt;3) linkage of fucosyl moiety transferred from GDP-beta-L-fucose to N-acetyl glucosamine (GlcNAc) within type 2 lactosamine (LacNAc, Gal-beta(1-&gt;4)GlcNAc) glycan attached to N- or O-linked glycoproteins. Robustly fucosylates nonsialylated distal LacNAc unit of the polylactosamine chain to form Lewis X antigen (CD15), a glycan determinant known to mediate important cellular functions in development and immunity. Fucosylates with lower efficiency sialylated LacNAc acceptors to form sialyl Lewis X and 6-sulfo sialyl Lewis X determinants that serve as recognition epitopes for C-type lectins. Together with FUT7 contributes to SELE, SELL and SELP selectin ligand biosynthesis and selectin-dependent lymphocyte homing, leukocyte migration and blood leukocyte homeostasis. In a cell type specific manner, may also fucosylate the internal LacNAc unit of the polylactosamine chain to form VIM-2 antigen that serves as recognition epitope for SELE. This chain is Alpha-(1,3)-fucosyltransferase 4 (FUT4), found in Bos taurus (Bovine).